The chain runs to 251 residues: Protein phosphatase 1 regulatory subunit 35 (251 aa).

2 disordered regions span residues 58-99 (LITV…QQTH) and 180-235 (PALA…VPRP). Residues 76–99 (PNKDEHGVETDREQSRECDGQQTH) are compositionally biased toward basic and acidic residues.

The protein belongs to the PPP1R35 family.

The protein resides in the cytoplasm. It is found in the cytoskeleton. The protein localises to the microtubule organizing center. It localises to the centrosome. Its subcellular location is the centriole. In terms of biological role, during centriole duplication, may play a role in the centriole elongation by promoting the recruitment of the microtubule-binding elongation machinery, leading to the centriole to centrosome conversion. In addition may play a role in the primary cilia assembly. The sequence is that of Protein phosphatase 1 regulatory subunit 35 from Danio rerio (Zebrafish).